The chain runs to 456 residues: Crinkler effector protein 2 (456 aa).

An N-terminal signal peptide occupies residues 1–17 (MVKLVCAIVGVAGSAFP). The segment at 18–54 (VDTDASQLVGDLKKAIKAENAMTFTGDAKDLQLFLAK) is LQLFLAK domain. Positions 55 to 136 (QPVDDESGKE…NMELPSSEQI (82 aa)) are DWL domain. The short motif at 137-143 (HVLVVVP) is the HVLVXXP motif element. Asparagine 338 carries an N-linked (GlcNAc...) asparagine glycan.

The protein belongs to the Crinkler effector family.

Its subcellular location is the secreted. It localises to the host nucleus. Functionally, secreted effector that effector that induces cell death when expressed in host plants. Induces the expression of defense response genes in tomato. The chain is Crinkler effector protein 2 from Phytophthora infestans (Potato late blight agent).